The primary structure comprises 335 residues: Pro-cathepsin H (335 aa).

Positions M1–A22 are cleaved as a signal peptide. The propeptide at A23 to S97 is activation peptide. N-linked (GlcNAc...) asparagine glycosylation is found at N72 and N101. Cystine bridges form between C102/C327, C138/C181, C172/C214, and C272/C322. A propeptide spanning residues K106–P115 is cleaved from the precursor. Residue C141 is part of the active site. The N-linked (GlcNAc...) asparagine glycan is linked to N230. Residues H281 and N301 contribute to the active site.

It belongs to the peptidase C1 family. Composed of a mini chain and a large chain. The large chain may be split into heavy and light chain. All chains are held together by disulfide bonds.

It is found in the lysosome. It catalyses the reaction Hydrolysis of proteins, acting as an aminopeptidase (notably, cleaving Arg-|-Xaa bonds) as well as an endopeptidase.. Functionally, important for the overall degradation of proteins in lysosomes. This chain is Pro-cathepsin H (CTSH), found in Bos taurus (Bovine).